A 250-amino-acid chain; its full sequence is Probable aquaporin TIP-type RB7-5A (250 aa).

The next 2 helical transmembrane spans lie at 20–42 and 55–77; these read AYVA…AIAY and GLVA…AANI. The NPA 1 motif lies at 83 to 85; sequence NPA. 3 helical membrane-spanning segments follow: residues 97 to 119, 140 to 162, and 172 to 194; these read TILT…CLLL, LQGV…ATAA, and IAPI…FSGG. The NPA 2 motif lies at 197 to 199; it reads NPA. The chain crosses the membrane as a helical span at residues 215 to 237; it reads WIYWAGPLIGGGLAGFIYGDVFI.

It belongs to the MIP/aquaporin (TC 1.A.8) family. TIP (TC 1.A.8.10) subfamily. As to expression, roots.

The protein localises to the vacuole membrane. In terms of biological role, channel protein in tonoplast. These proteins may allow the diffusion of amino acids and/or peptides from the vacuolar compartment to the cytoplasm. This chain is Probable aquaporin TIP-type RB7-5A, found in Nicotiana tabacum (Common tobacco).